The sequence spans 86 residues: Allergen Api g 5 (86 aa).

A glycan (N-linked (GlcNAc...) asparagine) is linked at Asn-62.

Belongs to the oxygen-dependent FAD-linked oxidoreductase family. FAD is required as a cofactor. In terms of processing, carries MUXF and MMXF, two complex N-linked glycans with alpha-1,3-fucose and beta-1,2-xylose residues in their structures. MMXF is added to Asn-62.

In Apium graveolens (Celery), this protein is Allergen Api g 5.